We begin with the raw amino-acid sequence, 994 residues long: Glycine dehydrogenase (decarboxylating), mitochondrial (994 aa).

The N-terminal 21 residues, 1-21, are a transit peptide targeting the mitochondrion; the sequence is MLKLLRNNGINKLKSNLIRNY. N6-(pyridoxal phosphate)lysine is present on Lys-742.

Belongs to the GcvP family. In terms of assembly, homodimer. The glycine cleavage system is composed of four proteins: P, T, L and H. Pyridoxal 5'-phosphate is required as a cofactor.

It localises to the mitochondrion. The enzyme catalyses N(6)-[(R)-lipoyl]-L-lysyl-[glycine-cleavage complex H protein] + glycine + H(+) = N(6)-[(R)-S(8)-aminomethyldihydrolipoyl]-L-lysyl-[glycine-cleavage complex H protein] + CO2. In terms of biological role, the glycine cleavage system catalyzes the degradation of glycine. The P protein binds the alpha-amino group of glycine through its pyridoxal phosphate cofactor; CO(2) is released and the remaining methylamine moiety is then transferred to the lipoamide cofactor of the H protein. This is Glycine dehydrogenase (decarboxylating), mitochondrial (gcvP) from Dictyostelium discoideum (Social amoeba).